Consider the following 481-residue polypeptide: Adenosylhomocysteinase (481 aa).

Positions 65, 140, and 200 each coordinate substrate. 201–203 (TTT) provides a ligand contact to NAD(+). Substrate contacts are provided by lysine 230 and aspartate 234. Residues asparagine 235, 264-269 (GYGDVG), glutamate 287, asparagine 322, 343-345 (IGH), and asparagine 393 contribute to the NAD(+) site.

It belongs to the adenosylhomocysteinase family. NAD(+) is required as a cofactor.

The protein localises to the cytoplasm. It catalyses the reaction S-adenosyl-L-homocysteine + H2O = L-homocysteine + adenosine. It functions in the pathway amino-acid biosynthesis; L-homocysteine biosynthesis; L-homocysteine from S-adenosyl-L-homocysteine: step 1/1. May play a key role in the regulation of the intracellular concentration of adenosylhomocysteine. The sequence is that of Adenosylhomocysteinase from Polynucleobacter necessarius subsp. necessarius (strain STIR1).